A 102-amino-acid chain; its full sequence is Protein YcgL (102 aa).

The YcgL domain maps to methionine 14–leucine 98.

This Salmonella agona (strain SL483) protein is Protein YcgL.